A 278-amino-acid chain; its full sequence is Diaminopimelate epimerase (278 aa).

Residues asparagine 13, glutamine 46, and asparagine 65 each contribute to the substrate site. Cysteine 74 (proton donor) is an active-site residue. Substrate is bound by residues 75-76, asparagine 157, asparagine 190, and 208-209; these read GN and ER. Cysteine 217 (proton acceptor) is an active-site residue. 218 to 219 contacts substrate; the sequence is GT.

The protein belongs to the diaminopimelate epimerase family. Homodimer.

Its subcellular location is the cytoplasm. The catalysed reaction is (2S,6S)-2,6-diaminopimelate = meso-2,6-diaminopimelate. It participates in amino-acid biosynthesis; L-lysine biosynthesis via DAP pathway; DL-2,6-diaminopimelate from LL-2,6-diaminopimelate: step 1/1. Its function is as follows. Catalyzes the stereoinversion of LL-2,6-diaminopimelate (L,L-DAP) to meso-diaminopimelate (meso-DAP), a precursor of L-lysine and an essential component of the bacterial peptidoglycan. This Magnetococcus marinus (strain ATCC BAA-1437 / JCM 17883 / MC-1) protein is Diaminopimelate epimerase.